A 393-amino-acid chain; its full sequence is Actin-related protein 2 (393 aa).

ATP-binding positions include 158–160 (GDG), 212–216 (RQMKE), and 303–308 (GGTTMY).

Belongs to the actin family. ARP2 subfamily. As to quaternary structure, component of the Arp2/3 complex.

It localises to the cytoplasm. The protein resides in the cytoskeleton. In terms of biological role, functions as ATP-binding component of the Arp2/3 complex which is involved in regulation of actin polymerization and together with an activating nucleation-promoting factor (NPF) mediates the formation of branched actin networks. Seems to contact the pointed end of the daughter actin filament. The chain is Actin-related protein 2 (arx-2) from Caenorhabditis briggsae.